The sequence spans 413 residues: Paxillin homolog 1 (413 aa).

Basic and acidic residues predominate over residues 33-45 (HISDRRSQSRDDF). The segment at 33-157 (HISDRRSQSR…PLHSDSMIGT (125 aa)) is disordered. The segment covering 49–69 (YDLQGNLNTQSVSNGNITTSP) has biased composition (polar residues). The span at 73 to 92 (RSSEGKDYSKSQERIYENES) shows a compositional bias: basic and acidic residues. Residues 118 to 143 (ASSSRKSLGPPSQAQSYSDVRSNGRS) show a composition bias toward polar residues. LIM zinc-binding domains are found at residues 174–232 (GDCA…NQFS), 233–292 (PKCQ…LFAP), 293–350 (KCNG…ESRG), and 351–410 (SICS…TYAL).

It belongs to the paxillin family. In terms of tissue distribution, isoform a: Expressed in all 95 body wall muscle cells as well as in the pharyngeal muscle cells (at protein level). Isoform c: Expressed in the body wall muscle cells and in the pharyngeal muscle cells.

The protein localises to the cell junction. It is found in the adherens junction. The protein resides in the cell membrane. It localises to the cytoplasm. Its subcellular location is the myofibril. The protein localises to the sarcomere. It is found in the m line. The protein resides in the cell projection. It localises to the podosome. Its function is as follows. Required for myofilament organization of the pharyngeal sarcomeres and for pharyngeal muscle contractions and hence for pharyngeal pumping. Together with lin-8, might be required for myofilament organization in the body wall muscles. The sequence is that of Paxillin homolog 1 (pxl-1) from Caenorhabditis elegans.